Here is a 126-residue protein sequence, read N- to C-terminus: Apolipoprotein C-IV (126 aa).

An N-terminal signal peptide occupies residues 1-27; that stretch reads MSLLRHRLQALPSLCLCVLVLACIGAC.

The protein belongs to the apolipoprotein C4 family.

The protein resides in the secreted. Its function is as follows. May participate in lipoprotein metabolism. This chain is Apolipoprotein C-IV (APOC4), found in Aotus nancymaae (Ma's night monkey).